The following is a 329-amino-acid chain: Malate dehydrogenase (329 aa).

12 to 18 (GAAGQIG) is a binding site for NAD(+). 2 residues coordinate substrate: arginine 93 and arginine 99. Residues asparagine 106, glutamine 113, and 130–132 (VGN) contribute to the NAD(+) site. Positions 132 and 166 each coordinate substrate. The active-site Proton acceptor is histidine 191.

This sequence belongs to the LDH/MDH superfamily. MDH type 2 family.

It carries out the reaction (S)-malate + NAD(+) = oxaloacetate + NADH + H(+). In terms of biological role, catalyzes the reversible oxidation of malate to oxaloacetate. The chain is Malate dehydrogenase from Aromatoleum aromaticum (strain DSM 19018 / LMG 30748 / EbN1) (Azoarcus sp. (strain EbN1)).